We begin with the raw amino-acid sequence, 234 residues long: Probable chemoreceptor glutamine deamidase CheD 1 (234 aa).

This sequence belongs to the CheD family.

The catalysed reaction is L-glutaminyl-[protein] + H2O = L-glutamyl-[protein] + NH4(+). Functionally, probably deamidates glutamine residues to glutamate on methyl-accepting chemotaxis receptors (MCPs), playing an important role in chemotaxis. This chain is Probable chemoreceptor glutamine deamidase CheD 1, found in Albidiferax ferrireducens (strain ATCC BAA-621 / DSM 15236 / T118) (Rhodoferax ferrireducens).